Reading from the N-terminus, the 916-residue chain is MNYKDTLLMPKTDFPMRGGLPNKEPQIQEMWDNDEQYRKALEKNKNNPSFILHDGPPYANGNLHMGHALNKIIKDFIVRYKTMQGFYAPYVPGWDTHGLPIEQALTKKGVDRKKMSVAEFREKCKEFALKQIDIQKKDFKRLGVRGDFNNPYITLTPEYEAAQIRLFGEMADKGLIYKGKKPVYWSPSSESSLAEAEIEYHDKRSASIYVAFDVKDSKGKVDSDAQFIIWTTTPWTIPSNVAITVHPELNYGQYNVNGHKYIVAQALSEAVAEALGWDKDSIQLEKEFTGKELEFVEAQHPFLDRVSLVINGEHVTTDAGTGCVHTAPGHGEDDYIVGQKYDLPVISPLNDKGVFTEEGGPFEGMFYDKANKAVTDLLKEKDALLKLDFITHSYPHDWRTKKPVIFRATPQWFASINKVRQDILDAIEDTNFKVDWGKTRIYNMIRDRGEWVISRQRVWGVPLPVFYAENGDIIMTKETVNHVADLFEKYGSNIWFEKEAKELLPEGFSHPGSPNGEFTKETDIMDVWFDSGSSHRGVLETRPELSFPADLYFEGSDQYRGWFNSSITTAVATRGQAPYKFLLSHGFVMDGEGKKMSKSLGNVIVPDQVVKQKGADIARLWVSSTDYLSDVRISDEILKQTSDVYRKIRNTLRFMLGNINDFNPETDSIAETNLLEVDRYLLNRLREFTASTINNYENFDYLNIYQEVQNFINVELSNFYLDYGKDILYIEKKDSHKRRSMQTVLYQILIDMTKLLAPILVHTAEEVWSHTPHVKEESVHLSDMPKVVDVDEELLEKWNTFMNLRDDVNRALEQARNEKVIGKSLEAKVVIGNNETFNTAEFLQQFNDLQQLFIVSQVEVKDKVNDGVSYQYGDIHIKHAEGEKCERCWNYTEELGSVGELEHLCPRCQEVVKTLV.

The 'HIGH' region motif lies at 57 to 67 (PYANGNLHMGH). Glu554 contributes to the L-isoleucyl-5'-AMP binding site. Residues 595–599 (KMSKS) carry the 'KMSKS' region motif. Lys598 is an ATP binding site. Cys885, Cys888, Cys905, and Cys908 together coordinate Zn(2+).

This sequence belongs to the class-I aminoacyl-tRNA synthetase family. IleS type 1 subfamily. Monomer. Requires Zn(2+) as cofactor.

The protein localises to the cytoplasm. The enzyme catalyses tRNA(Ile) + L-isoleucine + ATP = L-isoleucyl-tRNA(Ile) + AMP + diphosphate. Its function is as follows. Catalyzes the attachment of isoleucine to tRNA(Ile). As IleRS can inadvertently accommodate and process structurally similar amino acids such as valine, to avoid such errors it has two additional distinct tRNA(Ile)-dependent editing activities. One activity is designated as 'pretransfer' editing and involves the hydrolysis of activated Val-AMP. The other activity is designated 'posttransfer' editing and involves deacylation of mischarged Val-tRNA(Ile). In Staphylococcus epidermidis (strain ATCC 12228 / FDA PCI 1200), this protein is Isoleucine--tRNA ligase.